An 87-amino-acid chain; its full sequence is UPF0250 protein Ent638_1166 (87 aa).

The protein belongs to the UPF0250 family.

The protein is UPF0250 protein Ent638_1166 of Enterobacter sp. (strain 638).